The sequence spans 445 residues: Alpha/beta hydrolase psoB (445 aa).

Ser246 acts as the Nucleophile in catalysis.

Belongs to the AB hydrolase superfamily. FUS2 hydrolase family. In terms of assembly, homodimer.

Its pathway is secondary metabolite biosynthesis. Alpha/beta hydrolase; part of the gene cluster that mediates the biosynthesis of pseurotin A, a competitive inhibitor of chitin synthase and an inducer of nerve-cell proliferation. The PKS-NRPS hybrid synthetase psoA is responsible for the biosynthesis of azaspirene, one of the first intermediates having the 1-oxa-7-azaspiro[4,4]-non-2-ene-4,6-dione core of pseurotin, via condensation of one acetyl-CoA, 4 malonyl-CoA, and a L-phenylalanine molecule. The dual-functional monooxygenase/methyltransferase psoF seems to be involved in the addition of the C3 methyl group onto the pseurotin scaffold. Azaspirene is then converted to synerazol through 4 steps including oxidation of C17 by the cytochrome P450 monooxygenase psoD, O-methylation of the hydroxy group of C8 by the methyltransferase psoC, and the trans-to-cis isomerization of the C13 olefin by the glutathione S-transferase psoE. The fourth step of synerazol production is performed by the dual-functional monooxygenase/methyltransferase psoF which seems to catalyze the epoxidation of the intermediate deepoxy-synerazol. Synerazol can be attacked by a water molecule nonenzymatically at two different positions to yield two diol products, pseurotin A and pseurotin D. The polypeptide is Alpha/beta hydrolase psoB (Aspergillus fumigatus (strain ATCC MYA-4609 / CBS 101355 / FGSC A1100 / Af293) (Neosartorya fumigata)).